We begin with the raw amino-acid sequence, 114 residues long: uncharacterized protein (114 aa).

Its subcellular location is the mitochondrion. This is an uncharacterized protein from Arabidopsis thaliana (Mouse-ear cress).